A 267-amino-acid chain; its full sequence is Phosphate import ATP-binding protein PstB 2 (267 aa).

The region spanning 21–262 (LATKDLHVYY…AQCQSTNDYV (242 aa)) is the ABC transporter domain. 53 to 60 (GPSGCGKS) is a binding site for ATP.

It belongs to the ABC transporter superfamily. Phosphate importer (TC 3.A.1.7) family. In terms of assembly, the complex is composed of two ATP-binding proteins (PstB), two transmembrane proteins (PstC and PstA) and a solute-binding protein (PstS).

It is found in the cell membrane. The enzyme catalyses phosphate(out) + ATP + H2O = ADP + 2 phosphate(in) + H(+). Part of the ABC transporter complex PstSACB involved in phosphate import. Responsible for energy coupling to the transport system. The sequence is that of Phosphate import ATP-binding protein PstB 2 from Streptococcus pyogenes serotype M18 (strain MGAS8232).